A 365-amino-acid chain; its full sequence is Outer membrane protein assembly factor BamC (365 aa).

Residues 1–16 (MLKKVTPLFLVAAVAA) form the signal peptide. Residue cysteine 17 is the site of N-palmitoyl cysteine attachment. The S-diacylglycerol cysteine moiety is linked to residue cysteine 17.

The protein belongs to the BamC family. As to quaternary structure, part of the Bam complex.

The protein resides in the cell outer membrane. Functionally, part of the outer membrane protein assembly complex, which is involved in assembly and insertion of beta-barrel proteins into the outer membrane. The protein is Outer membrane protein assembly factor BamC of Shewanella oneidensis (strain ATCC 700550 / JCM 31522 / CIP 106686 / LMG 19005 / NCIMB 14063 / MR-1).